The sequence spans 268 residues: Glutamate 5-kinase (268 aa).

Lys-15 contacts ATP. Positions 55, 142, and 158 each coordinate substrate. ATP is bound at residue 178–179; the sequence is SD.

It belongs to the glutamate 5-kinase family.

The protein resides in the cytoplasm. The catalysed reaction is L-glutamate + ATP = L-glutamyl 5-phosphate + ADP. Its pathway is amino-acid biosynthesis; L-proline biosynthesis; L-glutamate 5-semialdehyde from L-glutamate: step 1/2. Catalyzes the transfer of a phosphate group to glutamate to form L-glutamate 5-phosphate. The protein is Glutamate 5-kinase of Oenococcus oeni (strain ATCC BAA-331 / PSU-1).